Reading from the N-terminus, the 158-residue chain is MAEEKKHYMTAEGKKKLEEELHYLITTRRKEVVERIKVARSFGDLSENSEYDSAKEDQAFVEGRIAQLEKMIRNAVMIENEKVDGNVVSLGKTVRLMELPDGEEEEYTIVGSAESDPFEGKISNDSPMAQSLLGKTVNDRVVVNTPGGEMEVEILEIR.

The stretch at asparagine 48–alanine 75 forms a coiled coil.

It belongs to the GreA/GreB family.

Its function is as follows. Necessary for efficient RNA polymerase transcription elongation past template-encoded arresting sites. The arresting sites in DNA have the property of trapping a certain fraction of elongating RNA polymerases that pass through, resulting in locked ternary complexes. Cleavage of the nascent transcript by cleavage factors such as GreA or GreB allows the resumption of elongation from the new 3'terminus. GreA releases sequences of 2 to 3 nucleotides. This Shouchella clausii (strain KSM-K16) (Alkalihalobacillus clausii) protein is Transcription elongation factor GreA.